A 398-amino-acid polypeptide reads, in one-letter code: Acetate kinase (398 aa).

Asn9 is a binding site for Mg(2+). Residue Lys16 coordinates ATP. Residue Arg93 coordinates substrate. The active-site Proton donor/acceptor is Asp150. Residues 209-213 (HLGAG), 284-286 (DMR), and 329-333 (GIGEH) contribute to the ATP site. Glu382 contributes to the Mg(2+) binding site.

This sequence belongs to the acetokinase family. Homodimer. The cofactor is Mg(2+). Mn(2+) serves as cofactor.

Its subcellular location is the cytoplasm. It carries out the reaction acetate + ATP = acetyl phosphate + ADP. It functions in the pathway metabolic intermediate biosynthesis; acetyl-CoA biosynthesis; acetyl-CoA from acetate: step 1/2. Functionally, catalyzes the formation of acetyl phosphate from acetate and ATP. Can also catalyze the reverse reaction. The sequence is that of Acetate kinase from Rhodopseudomonas palustris (strain TIE-1).